A 156-amino-acid chain; its full sequence is Small ribosomal subunit protein uS7 (156 aa).

Belongs to the universal ribosomal protein uS7 family. Part of the 30S ribosomal subunit. Contacts proteins S9 and S11.

One of the primary rRNA binding proteins, it binds directly to 16S rRNA where it nucleates assembly of the head domain of the 30S subunit. Is located at the subunit interface close to the decoding center, probably blocks exit of the E-site tRNA. In Nitratiruptor sp. (strain SB155-2), this protein is Small ribosomal subunit protein uS7.